We begin with the raw amino-acid sequence, 74 residues long: Small heat shock protein hspG10 (74 aa).

The sHSP domain maps to 31 to 74 (KTIIDILPSMDVTMTNDKLIIETELAGISKDHIEIDIKDSILTI).

The protein belongs to the small heat shock protein (HSP20) family.

The polypeptide is Small heat shock protein hspG10 (hspG10) (Dictyostelium discoideum (Social amoeba)).